The primary structure comprises 144 residues: Large ribosomal subunit protein uL15 (144 aa).

Residues 20-49 (GRGIGSGLGKTGGRGHKGQKSRSGGFHKVG) are disordered. Positions 21 to 31 (RGIGSGLGKTG) are enriched in gly residues.

This sequence belongs to the universal ribosomal protein uL15 family. As to quaternary structure, part of the 50S ribosomal subunit.

In terms of biological role, binds to the 23S rRNA. The sequence is that of Large ribosomal subunit protein uL15 from Neisseria gonorrhoeae (strain ATCC 700825 / FA 1090).